A 370-amino-acid chain; its full sequence is DnaJ homolog subfamily B member 12 (370 aa).

Residue methionine 1 is modified to N-acetylmethionine. A disordered region spans residues 51–92 (NQKPQPAGDQPQPTEATHTTHRKAAGANTASANGEAGGESTK). Positions 110–174 (DYYEILGVSR…EKRKQYDQFG (65 aa)) constitute a J domain. The residue at position 185 (histidine 185) is a Pros-methylhistidine. The chain crosses the membrane as a helical span at residues 242–262 (GGLGVFVQLMPILILILVSAL).

It belongs to the DnaJ family. DNAJB12/DNAJB14 subfamily. As to quaternary structure, homodimer and homotetramer. Interacts (via J domain) with HSPA8/Hsc70. Forms a multiprotein complex, at least composed of DNAJB12, DNAJB14, HSPA8/Hsc70 and SGTA; interaction with DNAJB14 and HSPA8/Hsc70 is direct. In terms of processing, methylated at His-185 by METTL9.

The protein resides in the endoplasmic reticulum membrane. The protein localises to the nucleus membrane. Functionally, acts as a co-chaperone with HSPA8/Hsc70; required to promote protein folding and trafficking, prevent aggregation of client proteins, and promote unfolded proteins to endoplasmic reticulum-associated degradation (ERAD) pathway. Acts by determining HSPA8/Hsc70's ATPase and polypeptide-binding activities. Can also act independently of HSPA8/Hsc70: together with DNAJB14, acts as a chaperone that promotes maturation of potassium channels KCND2 and KCNH2 by stabilizing nascent channel subunits and assembling them into tetramers. While stabilization of nascent channel proteins is dependent on HSPA8/Hsc70, the process of oligomerization of channel subunits is independent of HSPA8/Hsc70. When overexpressed, forms membranous structures together with DNAJB14 and HSPA8/Hsc70 within the nucleus; the role of these structures, named DJANGOs, is still unclear. The polypeptide is DnaJ homolog subfamily B member 12 (DNAJB12) (Bos taurus (Bovine)).